Reading from the N-terminus, the 189-residue chain is Threonylcarbamoyl-AMP synthase (189 aa).

The YrdC-like domain occupies 7 to 189 (NPRVNYAANM…LLTGQVVRPS (183 aa)).

The protein belongs to the SUA5 family. TsaC subfamily.

It localises to the cytoplasm. It catalyses the reaction L-threonine + hydrogencarbonate + ATP = L-threonylcarbamoyladenylate + diphosphate + H2O. In terms of biological role, required for the formation of a threonylcarbamoyl group on adenosine at position 37 (t(6)A37) in tRNAs that read codons beginning with adenine. Catalyzes the conversion of L-threonine, HCO(3)(-)/CO(2) and ATP to give threonylcarbamoyl-AMP (TC-AMP) as the acyladenylate intermediate, with the release of diphosphate. In Cellvibrio japonicus (strain Ueda107) (Pseudomonas fluorescens subsp. cellulosa), this protein is Threonylcarbamoyl-AMP synthase.